We begin with the raw amino-acid sequence, 161 residues long: 3-isopropylmalate dehydratase small subunit (161 aa).

It belongs to the LeuD family. LeuD type 2 subfamily. In terms of assembly, heterodimer of LeuC and LeuD.

It carries out the reaction (2R,3S)-3-isopropylmalate = (2S)-2-isopropylmalate. Its pathway is amino-acid biosynthesis; L-leucine biosynthesis; L-leucine from 3-methyl-2-oxobutanoate: step 2/4. Its function is as follows. Catalyzes the isomerization between 2-isopropylmalate and 3-isopropylmalate, via the formation of 2-isopropylmaleate. The chain is 3-isopropylmalate dehydratase small subunit from Clostridium beijerinckii (strain ATCC 51743 / NCIMB 8052) (Clostridium acetobutylicum).